We begin with the raw amino-acid sequence, 328 residues long: Ornithine transcarbamylase, mitochondrial (328 aa).

The N-terminal 6 residues, 1–6, are a transit peptide targeting the mitochondrion; sequence GGQPLQ. An N6-acetyllysine; alternate modification is found at Lys44. Residue Lys44 is modified to N6-succinyllysine; alternate. At Lys54 the chain carries N6-succinyllysine. At Lys62 the chain carries N6-acetyllysine; alternate. An N6-succinyllysine; alternate modification is found at Lys62. 64–68 contacts carbamoyl phosphate; sequence STRTR. Position 107 is a phosphoserine (Ser107). Residue Arg115 coordinates carbamoyl phosphate. Arg115 contacts L-ornithine. Lys118 is modified (N6-acetyllysine; alternate). N6-succinyllysine; alternate is present on Lys118. His142 lines the carbamoyl phosphate pocket. An L-ornithine-binding site is contributed by Asn173. N6-acetyllysine; alternate is present on residues Lys195, Lys205, and Lys212. N6-succinyllysine; alternate is present on residues Lys195, Lys205, and Lys212. Residue 237-241 participates in L-ornithine binding; it reads DTWIS. 2 positions are modified to N6-succinyllysine: Lys248 and Lys263. An L-ornithine-binding site is contributed by 276-279; it reads HCLP. Residue Cys277 is part of the active site. At Lys281 the chain carries N6-acetyllysine; alternate. Lys281 is modified (N6-succinyllysine; alternate). Arg304 provides a ligand contact to carbamoyl phosphate. Arg304 contacts L-ornithine.

Belongs to the aspartate/ornithine carbamoyltransferase superfamily. OTCase family. Homotrimer. Acetylation at Lys-62 negatively regulates ornithine carbamoyltransferase activity in response to nutrient signals.

It localises to the mitochondrion matrix. It catalyses the reaction carbamoyl phosphate + L-ornithine = L-citrulline + phosphate + H(+). It functions in the pathway nitrogen metabolism; urea cycle; L-citrulline from L-ornithine and carbamoyl phosphate: step 1/1. Its activity is regulated as follows. Negatively regulated by lysine acetylation. In terms of biological role, catalyzes the second step of the urea cycle, the condensation of carbamoyl phosphate with L-ornithine to form L-citrulline. The urea cycle ensures the detoxification of ammonia by converting it to urea for excretion. This Sus scrofa (Pig) protein is Ornithine transcarbamylase, mitochondrial.